A 132-amino-acid chain; its full sequence is Small ribosomal subunit protein uS8c (132 aa).

It belongs to the universal ribosomal protein uS8 family. As to quaternary structure, part of the 30S ribosomal subunit.

The protein localises to the plastid. Its subcellular location is the chloroplast. In terms of biological role, one of the primary rRNA binding proteins, it binds directly to 16S rRNA central domain where it helps coordinate assembly of the platform of the 30S subunit. This is Small ribosomal subunit protein uS8c (rps8) from Spirogyra maxima (Green alga).